The chain runs to 543 residues: Carboxypeptidase Y homolog A (543 aa).

The first 17 residues, 1 to 17 (MKFLTTGLLATAALAAA), serve as a signal peptide directing secretion. A propeptide spanning residues 18-124 (QEQHVLQAED…KLHNYDLRVK (107 aa)) is cleaved from the precursor. Intrachain disulfides connect Cys-179–Cys-419, Cys-313–Cys-327, Cys-337–Cys-360, Cys-344–Cys-353, and Cys-382–Cys-389. The N-linked (GlcNAc...) asparagine glycan is linked to Asn-210. Ser-266 is an active-site residue. Residue Asp-458 is part of the active site. Asn-509 carries N-linked (GlcNAc...) asparagine glycosylation. Residue His-520 is part of the active site.

It belongs to the peptidase S10 family.

It localises to the vacuole. It catalyses the reaction Release of a C-terminal amino acid with broad specificity.. Its function is as follows. Vacuolar carboxypeptidase involved in degradation of small peptides. Digests preferentially peptides containing an aliphatic or hydrophobic residue in P1' position, as well as methionine, leucine or phenylalanine in P1 position of ester substrate. This is Carboxypeptidase Y homolog A (cpyA) from Trichophyton verrucosum (strain HKI 0517).